Consider the following 342-residue polypeptide: Glucokinase (342 aa).

Position 18–23 (18–23 (GDIGGT)) interacts with ATP.

The protein belongs to the bacterial glucokinase family.

The protein localises to the cytoplasm. It catalyses the reaction D-glucose + ATP = D-glucose 6-phosphate + ADP + H(+). This is Glucokinase from Chelativorans sp. (strain BNC1).